Here is a 464-residue protein sequence, read N- to C-terminus: Signal recognition particle 54 kDa protein (464 aa).

Residues 104–111 (GLQGSGKT), 184–188 (DTAGR), and 242–245 (TKLD) each bind GTP.

This sequence belongs to the GTP-binding SRP family. SRP54 subfamily. As to quaternary structure, part of the signal recognition particle protein translocation system, which is composed of SRP and FtsY. Archaeal SRP consists of a 7S RNA molecule of 300 nucleotides and two protein subunits: SRP54 and SRP19.

The protein resides in the cytoplasm. The enzyme catalyses GTP + H2O = GDP + phosphate + H(+). Functionally, involved in targeting and insertion of nascent membrane proteins into the cytoplasmic membrane. Binds to the hydrophobic signal sequence of the ribosome-nascent chain (RNC) as it emerges from the ribosomes. The SRP-RNC complex is then targeted to the cytoplasmic membrane where it interacts with the SRP receptor FtsY. The chain is Signal recognition particle 54 kDa protein from Halorubrum lacusprofundi (strain ATCC 49239 / DSM 5036 / JCM 8891 / ACAM 34).